Here is a 114-residue protein sequence, read N- to C-terminus: Ig heavy chain V-A2 region BS-1 (114 aa).

Q1 bears the Pyrrolidone carboxylic acid mark. Residues 1–107 (QSVKESEGGL…YLGLMDVWGP (107 aa)) enclose the Ig-like domain.

In Oryctolagus cuniculus (Rabbit), this protein is Ig heavy chain V-A2 region BS-1.